The following is a 281-amino-acid chain: Homeobox protein Hox-A5 (281 aa).

Disordered regions lie at residues 65–144 and 162–183; these read VGNE…PCSS and PLEE…SDST. 2 stretches are compositionally biased toward polar residues: residues 68-99 and 114-127; these read ERTQ…STGT and VASS…QSQH. The span at 132–144 shows a compositional bias: low complexity; the sequence is NSITTPCSTPCSS. The span at 172-183 shows a compositional bias: polar residues; it reads APTTPQNVSDST. Positions 187–192 match the Antp-type hexapeptide motif; the sequence is IYPWMR. Positions 205-264 form a DNA-binding region, homeobox; the sequence is GKRARTAYTRYQTLELEKEFHFNRYLTRRRRIEIAHALCLSERQIKIWFQNRRMKWKKDN.

The protein belongs to the Antp homeobox family.

It is found in the nucleus. In terms of biological role, sequence-specific transcription factor which is part of a developmental regulatory system that provides cells with specific positional identities on the anterior-posterior axis. In Morone saxatilis (Striped bass), this protein is Homeobox protein Hox-A5 (hoxa5).